The chain runs to 112 residues: U15-hexatoxin-Hi1a (112 aa).

Positions 1–18 (MNTLIAFAVLLLLSTTLG) are cleaved as a signal peptide. Residues 19–73 (DTDDKVSHEEIQERKELSGISEELLLQQLEAVEAALMEKERLEEMEEDGNSREKR) constitute a propeptide that is removed on maturation. Cystine bridges form between Cys74-Cys88, Cys81-Cys93, and Cys87-Cys107.

The protein belongs to the neurotoxin 14 (magi-1) family. 08 (Ltx-4) subfamily. In terms of tissue distribution, expressed by the venom gland.

The protein localises to the secreted. Functionally, probable ion channel inhibitor. In Hadronyche infensa (Fraser island funnel-web spider), this protein is U15-hexatoxin-Hi1a.